A 745-amino-acid chain; its full sequence is 5-methyltetrahydropteroyltriglutamate--homocysteine methyltransferase (745 aa).

5-methyltetrahydropteroyltri-L-glutamate contacts are provided by residues R17–K20 and K111. L-homocysteine-binding positions include I421–S423 and E474. L-methionine is bound by residues I421–S423 and E474. Residues R505 to C506 and W551 contribute to the 5-methyltetrahydropteroyltri-L-glutamate site. D589 provides a ligand contact to L-homocysteine. D589 is an L-methionine binding site. E595 is a 5-methyltetrahydropteroyltri-L-glutamate binding site. Zn(2+)-binding residues include H631, C633, and E655. Catalysis depends on H684, which acts as the Proton donor. C716 contributes to the Zn(2+) binding site.

It belongs to the vitamin-B12 independent methionine synthase family. The cofactor is Zn(2+).

The enzyme catalyses 5-methyltetrahydropteroyltri-L-glutamate + L-homocysteine = tetrahydropteroyltri-L-glutamate + L-methionine. It participates in amino-acid biosynthesis; L-methionine biosynthesis via de novo pathway; L-methionine from L-homocysteine (MetE route): step 1/1. Its function is as follows. Catalyzes the transfer of a methyl group from 5-methyltetrahydrofolate to homocysteine resulting in methionine formation. This Thermodesulfovibrio yellowstonii (strain ATCC 51303 / DSM 11347 / YP87) protein is 5-methyltetrahydropteroyltriglutamate--homocysteine methyltransferase.